A 276-amino-acid chain; its full sequence is Putative ripening-related protein 5 (276 aa).

The N-terminal stretch at 1–18 is a signal peptide; it reads MAMIFLLAALSTTHLASS.

The protein belongs to the kiwellin family.

Its subcellular location is the secreted. The protein is Putative ripening-related protein 5 of Oryza sativa subsp. japonica (Rice).